The primary structure comprises 188 residues: Elongation factor P (188 aa).

It belongs to the elongation factor P family.

Its subcellular location is the cytoplasm. The protein operates within protein biosynthesis; polypeptide chain elongation. In terms of biological role, involved in peptide bond synthesis. Stimulates efficient translation and peptide-bond synthesis on native or reconstituted 70S ribosomes in vitro. Probably functions indirectly by altering the affinity of the ribosome for aminoacyl-tRNA, thus increasing their reactivity as acceptors for peptidyl transferase. This Rickettsia peacockii (strain Rustic) protein is Elongation factor P.